A 283-amino-acid chain; its full sequence is 4-diphosphocytidyl-2-C-methyl-D-erythritol kinase (283 aa).

Lysine 10 is an active-site residue. 99–109 lines the ATP pocket; that stretch reads PMGGGLGGGSS. Residue aspartate 141 is part of the active site.

Belongs to the GHMP kinase family. IspE subfamily. Homodimer.

The catalysed reaction is 4-CDP-2-C-methyl-D-erythritol + ATP = 4-CDP-2-C-methyl-D-erythritol 2-phosphate + ADP + H(+). The protein operates within isoprenoid biosynthesis; isopentenyl diphosphate biosynthesis via DXP pathway; isopentenyl diphosphate from 1-deoxy-D-xylulose 5-phosphate: step 3/6. Functionally, catalyzes the phosphorylation of the position 2 hydroxy group of 4-diphosphocytidyl-2C-methyl-D-erythritol. This chain is 4-diphosphocytidyl-2-C-methyl-D-erythritol kinase, found in Salmonella arizonae (strain ATCC BAA-731 / CDC346-86 / RSK2980).